An 84-amino-acid polypeptide reads, in one-letter code: uncharacterized protein (84 aa).

Residues 1–14 are compositionally biased toward low complexity; the sequence is MQKLNKSSSKGKNN. Residues 1-84 form a disordered region; that stretch reads MQKLNKSSSK…VDKGERKESE (84 aa). A compositionally biased stretch (gly residues) spans 28–40; sequence STYGFGPYGGGGF. Composition is skewed to basic and acidic residues over residues 53–65 and 73–84; these read DTKK…EEGT and KLVDKGERKESE.

This is an uncharacterized protein from Schizosaccharomyces pombe (strain 972 / ATCC 24843) (Fission yeast).